The following is a 632-amino-acid chain: tRNA 5-methylaminomethyl-2-thiouridine biosynthesis bifunctional protein MnmC (632 aa).

Residues 1–247 form a tRNA (mnm(5)s(2)U34)-methyltransferase region; that stretch reads MNSRIFPAAM…KWHMTLGQRL (247 aa). The tract at residues 267–632 is FAD-dependent cmnm(5)s(2)U34 oxidoreductase; sequence VGAGLAGAAV…TDLLAQIAPR (366 aa).

It in the N-terminal section; belongs to the methyltransferase superfamily. tRNA (mnm(5)s(2)U34)-methyltransferase family. This sequence in the C-terminal section; belongs to the DAO family. The cofactor is FAD.

It localises to the cytoplasm. It catalyses the reaction 5-aminomethyl-2-thiouridine(34) in tRNA + S-adenosyl-L-methionine = 5-methylaminomethyl-2-thiouridine(34) in tRNA + S-adenosyl-L-homocysteine + H(+). Its function is as follows. Catalyzes the last two steps in the biosynthesis of 5-methylaminomethyl-2-thiouridine (mnm(5)s(2)U) at the wobble position (U34) in tRNA. Catalyzes the FAD-dependent demodification of cmnm(5)s(2)U34 to nm(5)s(2)U34, followed by the transfer of a methyl group from S-adenosyl-L-methionine to nm(5)s(2)U34, to form mnm(5)s(2)U34. The sequence is that of tRNA 5-methylaminomethyl-2-thiouridine biosynthesis bifunctional protein MnmC from Bordetella bronchiseptica (strain ATCC BAA-588 / NCTC 13252 / RB50) (Alcaligenes bronchisepticus).